The following is a 291-amino-acid chain: 33 kDa chaperonin (291 aa).

Intrachain disulfides connect Cys-237-Cys-239 and Cys-270-Cys-273.

It belongs to the HSP33 family. Under oxidizing conditions two disulfide bonds are formed involving the reactive cysteines. Under reducing conditions zinc is bound to the reactive cysteines and the protein is inactive.

It localises to the cytoplasm. Redox regulated molecular chaperone. Protects both thermally unfolding and oxidatively damaged proteins from irreversible aggregation. Plays an important role in the bacterial defense system toward oxidative stress. This chain is 33 kDa chaperonin, found in Bacillus cytotoxicus (strain DSM 22905 / CIP 110041 / 391-98 / NVH 391-98).